The primary structure comprises 118 residues: Small ribosomal subunit protein uS13 (118 aa).

Residues 94-118 (GLPLRGQRTKTNARTRKGPRKPIKK) form a disordered region.

It belongs to the universal ribosomal protein uS13 family. In terms of assembly, part of the 30S ribosomal subunit. Forms a loose heterodimer with protein S19. Forms two bridges to the 50S subunit in the 70S ribosome.

In terms of biological role, located at the top of the head of the 30S subunit, it contacts several helices of the 16S rRNA. In the 70S ribosome it contacts the 23S rRNA (bridge B1a) and protein L5 of the 50S subunit (bridge B1b), connecting the 2 subunits; these bridges are implicated in subunit movement. Contacts the tRNAs in the A and P-sites. This is Small ribosomal subunit protein uS13 from Cellvibrio japonicus (strain Ueda107) (Pseudomonas fluorescens subsp. cellulosa).